Reading from the N-terminus, the 3511-residue chain is Unconventional myosin-XV (3511 aa).

4 disordered regions span residues 1–44, 574–690, 712–1030, and 1105–1135; these read MADE…TPKI, KKPI…SLRQ, FAEP…PNKN, and VSSF…PQAC. A compositionally biased stretch (polar residues) spans 622–634; sequence SQPQARNNNNSHG. A compositionally biased stretch (pro residues) spans 654 to 672; it reads PPMPAPSPSPASPLTPPFS. Positions 769–792 are enriched in low complexity; sequence PSLRSLPGQGYHSPLGPLSPQLSL. Residues 797 to 807 show a composition bias toward pro residues; the sequence is FQPPFPPPPRR. Positions 1206-1883 constitute a Myosin motor domain; that stretch reads DGVEDMTQLE…LHQLLESMRE (678 aa). Residue 1299-1306 coordinates ATP; the sequence is GESGSGKT. A coiled-coil region spans residues 1307–1334; sequence EATKLILRCLAAMNQRRDVMQQIKILEA. The actin-binding stretch occupies residues 1776 to 1783; sequence FVRCLKPN. The interval 1872–2013 is neck or regulatory domain; it reads EHLHQLLESM…SSGPRVAVVR (142 aa). IQ domains are found at residues 1886 to 1908 and 1909 to 1938; these read QNRA…HFRS and LRRK…SLLK. The tract at residues 2014–3511 is tail; it reads APRLQAEPCV…TLPPSEITLL (1498 aa). One can recognise a MyTH4 1 domain in the interval 2049–2195; the sequence is MLTVPLKMPL…PTQLEWTAIQ (147 aa). 5 disordered regions span residues 2330 to 2359, 2392 to 2425, 2460 to 2509, 2565 to 2584, and 2629 to 2648; these read SHKE…GEST, YRMK…PIPG, PLSA…SVAK, KQPP…GKVF, and RPCM…PPED. The span at 2337–2351 shows a compositional bias: polar residues; the sequence is NGETEAQRWTSNRQA. Positions 2395–2406 are enriched in gly residues; it reads KGGGQPGGGGGS. Residues 2410–2420 are compositionally biased toward basic and acidic residues; it reads DTSRRPPEPKL. The span at 2573–2584 shows a compositional bias: basic and acidic residues; the sequence is PEARRTDGGKVF. The SH3 domain maps to 2848-2934; sequence KDSDYVVAVR…PSELVQPAAA (87 aa). Residues 2964 to 2984 form a disordered region; that stretch reads EVGRRREGPPVRARSADSGED. Over residues 2965 to 2980 the composition is skewed to basic and acidic residues; that stretch reads VGRRREGPPVRARSAD. One can recognise a MyTH4 2 domain in the interval 3031–3185; the sequence is FTKVPIQESL…PSNMELRAML (155 aa). In terms of domain architecture, FERM spans 3190–3511; sequence SKRQLFLLPG…TLPPSEITLL (322 aa).

It belongs to the TRAFAC class myosin-kinesin ATPase superfamily. Myosin family. In terms of assembly, interacts with the third PDZ domain of WHRN which is necessary for localization of WHRN to stereocilium tips. Interacts with FASLG. Interacts with EPS8. In the developing inner ear, expressed in cochlea and vestibular apparatus. Expression appears to be restricted to cochlear neurosensory cells and upper epithelial layer of macula saccula. Also expressed in macula utriculi and cristae ampullaris of the semicircular canals. In adult cochlear hair cells, highest expression in stereocilia and apical body.

Its subcellular location is the cell projection. It is found in the stereocilium. The protein resides in the cytoplasm. The protein localises to the cytoskeleton. Myosins are actin-based motor molecules with ATPase activity. Unconventional myosins serve in intracellular movements. Their highly divergent tails are presumed to bind to membranous compartments, which would be moved relative to actin filaments. Required for the arrangement of stereocilia in mature hair bundles. In Mus musculus (Mouse), this protein is Unconventional myosin-XV (Myo15a).